A 601-amino-acid polypeptide reads, in one-letter code: MEGSDFLLAGVLFLFAAVAAVPLASRLGIGAVLGYLLAGIAIGPWGLGFISDVDEILHFSELGVVFLMFIIGLELNPSKLWQLRRSIFGVGAAQVLLSAALLAGLLMLTDFAWQAAVVGGIGLAMSSTAMALQLMREKGMNRSESGQLGFSVLLFQDLAVIPALALVPLLAGSADEHFDWMKIGIKVLAFVGMLIGGRYLLRPVFRFIAASGVREVFTAATLLLVLGSALFMDALGLSMALGTFIAGVLLAESEYRHELETAIDPFKGLLLGLFFISVGMSLNLGVLYTHLLWVVISVVVLVAVKILVLYLLARLYGVRSSERMQFAGVLSQGGEFAFVLFSTASSQRLFQGDQMALLLVTVTLSMMTTPLLMKLVDKWLSRQFNGPEEEDEKPWVNDDKPQVIVVGFGRFGQVIGRLLMANKMRITVLERDISAVNLMRKYGYKVYYGDATQVDLLRSAGAEAAESIVITCNEPEDTMKLVEICQQHFPHLHILARARGRVEAHELLQAGVTQFSRETFSSALELGRKTLVTLGMHPHQAQRAQLHFRRLDMRMLRELIPMHADTVQISRAREARRELEEIFQREMQQERRQLDGWDEFE.

The next 13 membrane-spanning stretches (helical) occupy residues 4 to 24 (SDFLLAGVLFLFAAVAAVPLA), 29 to 49 (IGAVLGYLLAGIAIGPWGLGF), 55 to 75 (EILHFSELGVVFLMFIIGLEL), 87 to 107 (IFGVGAAQVLLSAALLAGLLM), 115 to 135 (AAVVGGIGLAMSSTAMALQLM), 152 to 172 (VLLFQDLAVIPALALVPLLAG), 177 to 197 (HFDWMKIGIKVLAFVGMLIGG), 207 to 227 (FIAASGVREVFTAATLLLVLG), 230 to 250 (LFMDALGLSMALGTFIAGVLL), 268 to 288 (GLLLGLFFISVGMSLNLGVLY), 291 to 311 (LLWVVISVVVLVAVKILVLYL), 324 to 344 (MQFAGVLSQGGEFAFVLFSTA), and 356 to 376 (ALLLVTVTLSMMTTPLLMKLV). The region spanning 400–519 (KPQVIVVGFG…AGVTQFSRET (120 aa)) is the RCK N-terminal domain.

Belongs to the monovalent cation:proton antiporter 2 (CPA2) transporter (TC 2.A.37) family. KefB subfamily. Interacts with the regulatory subunit KefG.

It is found in the cell inner membrane. Pore-forming subunit of a potassium efflux system that confers protection against electrophiles. Catalyzes K(+)/H(+) antiport. This chain is Glutathione-regulated potassium-efflux system protein KefB, found in Escherichia coli (strain ATCC 8739 / DSM 1576 / NBRC 3972 / NCIMB 8545 / WDCM 00012 / Crooks).